A 234-amino-acid chain; its full sequence is Orotidine 5'-phosphate decarboxylase (234 aa).

Residues D10, K32, 59 to 68, T119, R180, Q189, G209, and R210 each bind substrate; that span reads DLKFHDIPNT. The Proton donor role is filled by K61.

Belongs to the OMP decarboxylase family. Type 1 subfamily. As to quaternary structure, homodimer.

The enzyme catalyses orotidine 5'-phosphate + H(+) = UMP + CO2. Its pathway is pyrimidine metabolism; UMP biosynthesis via de novo pathway; UMP from orotate: step 2/2. Its function is as follows. Catalyzes the decarboxylation of orotidine 5'-monophosphate (OMP) to uridine 5'-monophosphate (UMP). This chain is Orotidine 5'-phosphate decarboxylase, found in Mannheimia succiniciproducens (strain KCTC 0769BP / MBEL55E).